Here is a 1194-residue protein sequence, read N- to C-terminus: ATP-dependent RNA helicase DHX30 (1194 aa).

Basic and acidic residues predominate over residues 1–10; it reads MFSLDSFRKD. Positions 1–27 are disordered; the sequence is MFSLDSFRKDRAQHRQRQCKLPPPRLP. Phosphoserine is present on S6. The DRBM domain maps to 53 to 121; the sequence is PKNLLNSVIG…QAAAAACQLF (69 aa). The disordered stretch occupies residues 150–199; that stretch reads ADSWWRPEPTMPPTSWRQLNPESIRPGGPGGLSRSLGREEEEDEEEELEE. The segment covering 188-199 has biased composition (acidic residues); that stretch reads EEEEDEEEELEE. Phosphoserine is present on residues S226 and S380. The region spanning 444-612 is the Helicase ATP-binding domain; it reads LNAIEQHPVV…FGGCPVIKVP (169 aa). Residue 457 to 464 coordinates ATP; it reads GDTGCGKT. The short motif at 559–562 is the DEAH box element; the sequence is DEVH. Residues 654-827 form the Helicase C-terminal domain; it reads LVTDLVLHID…NLVLQAKIHM (174 aa).

This sequence belongs to the DEAD box helicase family. DEAH subfamily. As to quaternary structure, identified in a complex with TFAM and SSBP1. Interacts (via N-terminus) with ZC3HAV1 (via N-terminal domain) in an RNA-independent manner. Found in a complex with GRSF1, DDX28, FASTKD2 and FASTKD5.

It localises to the cytoplasm. The protein resides in the mitochondrion. Its subcellular location is the mitochondrion matrix. It is found in the mitochondrion nucleoid. It carries out the reaction ATP + H2O = ADP + phosphate + H(+). Functionally, RNA-dependent helicase. Plays an important role in the assembly of the mitochondrial large ribosomal subunit. Required for optimal function of the zinc-finger antiviral protein ZC3HAV1. Associates with mitochondrial DNA. Involved in nervous system development and differentiation through its involvement in the up-regulation of a number of genes which are required for neurogenesis, including GSC, NCAM1, neurogenin, and NEUROD. The sequence is that of ATP-dependent RNA helicase DHX30 (DHX30) from Pongo abelii (Sumatran orangutan).